The chain runs to 315 residues: Olfactory receptor 4A8 (315 aa).

Over 1-24 (MRQNNNITEFVLLGFSQYPDVQNA) the chain is Extracellular. Asparagine 6 carries an N-linked (GlcNAc...) asparagine glycan. Residues 25–45 (LFVMFLLIYIVTMVGNLLIVV) form a helical membrane-spanning segment. The Cytoplasmic segment spans residues 46–57 (SIIASPFLGSPV). A helical transmembrane segment spans residues 58–80 (YFFLACLSFIDAVYSTTISPVLI). Over 81–95 (VDLLCDKKTISFPAC) the chain is Extracellular. Cysteine 95 and cysteine 177 are disulfide-bonded. The helical transmembrane segment at 96 to 116 (MGQLFIEHLFGDTDVFLLVVM) threads the bilayer. The Cytoplasmic portion of the chain corresponds to 117 to 139 (AYDRYVATCKPLRYLTIMNRQVC). The helical transmembrane segment at 140-160 (ILLLVVAVTGGFLHSVFQILV) threads the bilayer. The Extracellular segment spans residues 161 to 193 (VYSLPFCGPNVIYHFFCNIYPLLDLECTDTYFV). A helical transmembrane segment spans residues 194-214 (GLAVVFNGGAICMVIFTLLLI). At 215 to 235 (SYGVILNSLKTYSPEGRHKAP) the chain is on the cytoplasmic side. The chain crosses the membrane as a helical span at residues 236–256 (FICSSHFIMVILFFVPCIFLY). Over 257 to 266 (VRPVSNFPID) the chain is Extracellular. The helical transmembrane segment at 267 to 287 (KFLTVFYSVITPKLNPFIYML) threads the bilayer. The Cytoplasmic segment spans residues 288–315 (RNSEMRNAIENLLGYQSGKTGFRCSKLN).

This sequence belongs to the G-protein coupled receptor 1 family.

It is found in the cell membrane. Odorant receptor. The chain is Olfactory receptor 4A8 (OR4A8) from Homo sapiens (Human).